A 195-amino-acid polypeptide reads, in one-letter code: Interferon tau-11 (195 aa).

The first 23 residues, 1-23, serve as a signal peptide directing secretion; that stretch reads MAFVLSLLMALVLVSYGPGGSLG. Disulfide bonds link cysteine 24/cysteine 122 and cysteine 52/cysteine 162. Residue asparagine 101 is glycosylated (N-linked (GlcNAc...) asparagine).

This sequence belongs to the alpha/beta interferon family. IFN-alphaII subfamily. In terms of tissue distribution, constitutively and exclusively expressed in the mononuclear cells of the extraembryonic trophectoderm.

It is found in the secreted. Its function is as follows. Paracrine hormone primarily responsible for maternal recognition of pregnancy. Interacts with endometrial receptors, probably type I interferon receptors, and blocks estrogen receptor expression, preventing the estrogen-induced increase in oxytocin receptor expression in the endometrium. This results in the suppression of the pulsatile endometrial release of the luteolytic hormone prostaglandin F2-alpha, hindering the regression of the corpus luteum (luteolysis) and therefore a return to ovarian cyclicity. This, and a possible direct effect of IFN-tau on prostaglandin synthesis, leads in turn to continued ovarian progesterone secretion, which stimulates the secretion by the endometrium of the nutrients required for the growth of the conceptus. In summary, displays particularly high antiviral and antiproliferative potency concurrently with particular weak cytotoxicity, high antiluteolytic activity and immunomodulatory properties. In contrast with other IFNs, IFN-tau is not virally inducible. In Ovis aries (Sheep), this protein is Interferon tau-11 (IFNT11).